The primary structure comprises 872 residues: DNA mismatch repair protein MutS (872 aa).

An ATP-binding site is contributed by 626–633 (GPNMAGKS).

The protein belongs to the DNA mismatch repair MutS family.

In terms of biological role, this protein is involved in the repair of mismatches in DNA. It is possible that it carries out the mismatch recognition step. This protein has a weak ATPase activity. This is DNA mismatch repair protein MutS from Chlorobium phaeobacteroides (strain DSM 266 / SMG 266 / 2430).